The following is a 598-amino-acid chain: Arginine--tRNA ligase (598 aa).

The 'HIGH' region motif lies at 139 to 149; sequence ANPTGPMHVGH.

The protein belongs to the class-I aminoacyl-tRNA synthetase family. In terms of assembly, monomer.

It is found in the cytoplasm. It catalyses the reaction tRNA(Arg) + L-arginine + ATP = L-arginyl-tRNA(Arg) + AMP + diphosphate. The polypeptide is Arginine--tRNA ligase (Bradyrhizobium sp. (strain ORS 278)).